We begin with the raw amino-acid sequence, 399 residues long: MKMRFLGLVVCLVLWTLHSEASGGKLTAVNPETNMNVSEIISYWGFPSEEYLVETEDGYILCLNRIPHGRKNHSDKGPKPVVFLQHGLLADSSNWVTNLANSSLGFILADAGFDVWMGNSRGNTWSRKHKTLSVSQDEFWAFSYDEMAKYDLPASINFILNKTGQEQVYYVGHSQGTTIGFIAFSQIPELAKRIKMFFALAPVVSVDFCTSPMAKLGRLPDLLIKDLFGDKEFLPQSAFLKWLGTHVCTHVILKELCGNLCFLLCGFNERNLNMSRVDVYTTHSPAGTSVQNMLHWSQAVKFQKFQAFDWGSSAKNYFHYNQSYPPTYNVKDMLVPTAVWSGGHDWLADVYDINILLTQITNLVFHESIPEWEHLDFIWGLDAPWRLYNKIINLMKKYQ.

The N-terminal stretch at 1–27 is a signal peptide; sequence MKMRFLGLVVCLVLWTLHSEASGGKLT. Residues 28–76 constitute a propeptide, removed in mature form; that stretch reads AVNPETNMNVSEIISYWGFPSEEYLVETEDGYILCLNRIPHGRKNHSDK. 4 N-linked (GlcNAc...) asparagine glycosylation sites follow: asparagine 36, asparagine 72, asparagine 101, and asparagine 161. Residues 80–380 enclose the AB hydrolase-1 domain; the sequence is PVVFLQHGLL…EWEHLDFIWG (301 aa). Serine 174 functions as the Charge relay system in the catalytic mechanism. 2 N-linked (GlcNAc...) asparagine glycosylation sites follow: asparagine 273 and asparagine 321. Histidine 374 functions as the Charge relay system in the catalytic mechanism.

It belongs to the AB hydrolase superfamily. Lipase family. In terms of assembly, monomer. In terms of processing, glycosylation is not essential for catalytic activity.

The protein localises to the lysosome. It carries out the reaction a sterol ester + H2O = a sterol + a fatty acid + H(+). It catalyses the reaction cholesteryl (9Z-octadecenoate) + H2O = cholesterol + (9Z)-octadecenoate + H(+). The catalysed reaction is a triacylglycerol + H2O = a 1,2-diacylglycerol + a fatty acid + H(+). The enzyme catalyses 1,2-di-(9Z-octadecenoyl)-glycerol + (9Z)-octadecenoate + H(+) = 1,2,3-tri-(9Z-octadecenoyl)-glycerol + H2O. It carries out the reaction a 1,2-diacylglycerol + H2O = a 1-acylglycerol + a fatty acid + H(+). It catalyses the reaction 1,2-di-(9Z-octadecenoyl)-glycerol + H2O = 1-(9Z-octadecenoyl)-glycerol + (9Z)-octadecenoate + H(+). The catalysed reaction is a 1,3-diacylglycerol + H2O = a 1-acylglycerol + a fatty acid + H(+). The enzyme catalyses 1,3-di-(9Z-octadecenoyl)-glycerol + H2O = 1-(9Z-octadecenoyl)-glycerol + (9Z)-octadecenoate + H(+). Catalyzes the deacylation of cholesteryl ester core lipids of endocytosed low density lipoproteins to generate free fatty acids and cholesterol. Hydrolyzes triglycerides (1,2,3-triacylglycerol) and diglycerides (such as 1,2-diacylglycerol and 1,3-diacylglycerol) with preference for the acyl moieties at the sn-1 or sn-3 positions. The protein is Lysosomal acid lipase/cholesteryl ester hydrolase (LIPA) of Macaca fascicularis (Crab-eating macaque).